Reading from the N-terminus, the 67-residue chain is MMSKLGVLLTICLLLFPLTAVQLDGDQPADLPALRTQDIATDHSPWFDPVKRCCSRYCYICIPCCPN.

The first 20 residues, 1–20 (MMSKLGVLLTICLLLFPLTA), serve as a signal peptide directing secretion. Residues 21–50 (VQLDGDQPADLPALRTQDIATDHSPWFDPV) constitute a propeptide that is removed on maturation. 3 disulfide bridges follow: cysteine 53-cysteine 65, cysteine 54-cysteine 61, and cysteine 58-cysteine 64. Proline 63 carries the 4-hydroxyproline modification.

This sequence belongs to the conotoxin M superfamily. In terms of tissue distribution, expressed by the venom duct.

It localises to the secreted. In Conus tessulatus (Tessellate cone), this protein is Conotoxin TsMMSK-011.